A 75-amino-acid polypeptide reads, in one-letter code: Acylphosphatase-like protein MJ1405 (75 aa).

The Acylphosphatase-like domain maps to 8 to 75; the sequence is TYEIIIYGRI…TNFWRVRKCK (68 aa).

This is Acylphosphatase-like protein MJ1405 from Methanocaldococcus jannaschii (strain ATCC 43067 / DSM 2661 / JAL-1 / JCM 10045 / NBRC 100440) (Methanococcus jannaschii).